The primary structure comprises 171 residues: MKRAKKYPFLTLQRQRFHLNFENASSAAGIPAERDFYRWAWSALKNEYLRADIGLILLDEEEARAYNRDYRGKDYATNVLSFALNEGEILPCQVSERLYGDLIICPQVVLKEAAEQGKTPERHFAHLTIHGTLHLMGYDHIKDDEAEIMEAEEIRLMRAAGYPNPYREDGH.

Positions 130, 134, and 140 each coordinate Zn(2+).

The protein belongs to the endoribonuclease YbeY family. The cofactor is Zn(2+).

The protein localises to the cytoplasm. In terms of biological role, single strand-specific metallo-endoribonuclease involved in late-stage 70S ribosome quality control and in maturation of the 3' terminus of the 16S rRNA. The protein is Endoribonuclease YbeY of Neisseria gonorrhoeae (strain ATCC 700825 / FA 1090).